A 246-amino-acid polypeptide reads, in one-letter code: MDAFIRVANQSQGRDRLFRATQHACMLLRYLLESKADKEAVVLKLKRLETSVSTGRKWFRLGNVFHAIQATEQSIQAADLAPRLCLTLANLNRVVYYICDTVLWAKSVGLTSGVNREKWQRWAARHYYYFLLLSLVRDLYEILLQMGQVARDRAKREKSSRDPPKYSVANEETEWLQSFLLLLFQSLKRHPPLLLDTVKNFCDILIPLNQLGIYKSNLGVVGLGGLISSLAGLLTVVYPQLKLKAR.

Residues 1–93 (MDAFIRVANQ…LCLTLANLNR (93 aa)) are Cytoplasmic-facing. The chain crosses the membrane as a helical span at residues 94–114 (VVYYICDTVLWAKSVGLTSGV). At 115–217 (NREKWQRWAA…LNQLGIYKSN (103 aa)) the chain is on the lumenal side. A helical transmembrane segment spans residues 218-238 (LGVVGLGGLISSLAGLLTVVY). A required for homodimerization, interaction with PEX11G, and peroxisomal localization region spans residues 218–238 (LGVVGLGGLISSLAGLLTVVY). Topologically, residues 239–246 (PQLKLKAR) are cytoplasmic.

The protein belongs to the peroxin-11 family. Homodimer. Heterodimer with PEX11G. Probably interacts with COPB2 and COPA. Interacts with PEX19. Interacts with FIS1. Strongly expressed in liver and at lower levels in heart, brain, kidney and testis.

The protein resides in the peroxisome membrane. Functionally, may be involved in peroxisomal proliferation and may regulate peroxisomes division. May mediate binding of coatomer proteins to the peroxisomal membrane. Promotes membrane protrusion and elongation on the peroxisomal surface. The sequence is that of Peroxisomal membrane protein 11A (Pex11a) from Mus musculus (Mouse).